The following is a 174-amino-acid chain: Small ribosomal subunit protein uS5 (174 aa).

Positions leucine 19–valine 82 constitute an S5 DRBM domain.

This sequence belongs to the universal ribosomal protein uS5 family. As to quaternary structure, part of the 30S ribosomal subunit. Contacts proteins S4 and S8.

Its function is as follows. With S4 and S12 plays an important role in translational accuracy. In terms of biological role, located at the back of the 30S subunit body where it stabilizes the conformation of the head with respect to the body. The protein is Small ribosomal subunit protein uS5 of Azoarcus sp. (strain BH72).